The following is a 234-amino-acid chain: Lipoprotein-releasing system ATP-binding protein LolD (234 aa).

Positions 7-233 (LQCINLCKRY…LQHHLTLVGA (227 aa)) constitute an ABC transporter domain. 43-50 (GSSGSGKS) contacts ATP.

The protein belongs to the ABC transporter superfamily. Lipoprotein translocase (TC 3.A.1.125) family. As to quaternary structure, the complex is composed of two ATP-binding proteins (LolD) and two transmembrane proteins (LolC and LolE).

The protein resides in the cell inner membrane. Its function is as follows. Part of the ABC transporter complex LolCDE involved in the translocation of mature outer membrane-directed lipoproteins, from the inner membrane to the periplasmic chaperone, LolA. Responsible for the formation of the LolA-lipoprotein complex in an ATP-dependent manner. The sequence is that of Lipoprotein-releasing system ATP-binding protein LolD from Yersinia pestis bv. Antiqua (strain Antiqua).